Consider the following 292-residue polypeptide: Elongation factor Ts (292 aa).

The involved in Mg(2+) ion dislocation from EF-Tu stretch occupies residues 80-83 (TDSV).

This sequence belongs to the EF-Ts family.

Its subcellular location is the cytoplasm. Associates with the EF-Tu.GDP complex and induces the exchange of GDP to GTP. It remains bound to the aminoacyl-tRNA.EF-Tu.GTP complex up to the GTP hydrolysis stage on the ribosome. The sequence is that of Elongation factor Ts from Lactiplantibacillus plantarum (strain ATCC BAA-793 / NCIMB 8826 / WCFS1) (Lactobacillus plantarum).